Here is a 120-residue protein sequence, read N- to C-terminus: Large ribosomal subunit protein uL22 (120 aa).

The protein belongs to the universal ribosomal protein uL22 family. Part of the 50S ribosomal subunit.

Functionally, this protein binds specifically to 23S rRNA; its binding is stimulated by other ribosomal proteins, e.g. L4, L17, and L20. It is important during the early stages of 50S assembly. It makes multiple contacts with different domains of the 23S rRNA in the assembled 50S subunit and ribosome. The globular domain of the protein is located near the polypeptide exit tunnel on the outside of the subunit, while an extended beta-hairpin is found that lines the wall of the exit tunnel in the center of the 70S ribosome. The chain is Large ribosomal subunit protein uL22 from Corynebacterium kroppenstedtii (strain DSM 44385 / JCM 11950 / CIP 105744 / CCUG 35717).